The chain runs to 216 residues: Sarcospan (216 aa).

Topologically, residues 1 to 26 are cytoplasmic; the sequence is MGRKPSPRAQELPEEEARTCCGCRFP. A helical transmembrane segment spans residues 27 to 47; it reads LLLALLQLALGIAVTVLGFLM. Over 48 to 59 the chain is Extracellular; sequence ASISPSLLVRDT. The chain crosses the membrane as a helical span at residues 60–80; it reads PFWAGSIVCVVAYLGLFMLCV. At 81 to 95 the chain is on the cytoplasmic side; that stretch reads SYQVDERTCVQFSMK. A helical transmembrane segment spans residues 96 to 116; that stretch reads VFYFLLSALGLMVCMLAVAFA. Over 117 to 166 the chain is Extracellular; it reads AHHYSLLAQFTCETSLDSCQCKLPSSEPLSRAFVYRDVTDCTSVTGTFKL. A helical membrane pass occupies residues 167-187; it reads FLIIQMVLNLVCGLVCLLACF. Residues 188 to 216 are Cytoplasmic-facing; that stretch reads VMWKHRYQVFYVGVGLRSLMASDGQLPKA.

Its subcellular location is the cell membrane. The protein localises to the sarcolemma. It is found in the postsynaptic cell membrane. In terms of biological role, component of the dystrophin-glycoprotein complex (DGC), a complex that spans the muscle plasma membrane and forms a link between the F-actin cytoskeleton and the extracellular matrix. Preferentially associates with the sarcoglycan subcomplex of the DGC. In Mus musculus (Mouse), this protein is Sarcospan (Sspn).